Here is a 345-residue protein sequence, read N- to C-terminus: Phenylalanine--tRNA ligase alpha subunit (345 aa).

Glu253 provides a ligand contact to Mg(2+).

The protein belongs to the class-II aminoacyl-tRNA synthetase family. Phe-tRNA synthetase alpha subunit type 1 subfamily. Tetramer of two alpha and two beta subunits. Requires Mg(2+) as cofactor.

It localises to the cytoplasm. The catalysed reaction is tRNA(Phe) + L-phenylalanine + ATP = L-phenylalanyl-tRNA(Phe) + AMP + diphosphate + H(+). The sequence is that of Phenylalanine--tRNA ligase alpha subunit from Lawsonia intracellularis (strain PHE/MN1-00).